The following is a 485-amino-acid chain: Putative aldehyde dehydrogenase AldY (485 aa).

G231–G236 contributes to the NAD(+) binding site. Catalysis depends on residues E253 and C287.

Belongs to the aldehyde dehydrogenase family.

It catalyses the reaction an aldehyde + NAD(+) + H2O = a carboxylate + NADH + 2 H(+). May contribute to protect cells against stress due to ethanol and related compounds. The sequence is that of Putative aldehyde dehydrogenase AldY (aldY) from Bacillus subtilis (strain 168).